We begin with the raw amino-acid sequence, 260 residues long: Proliferating cell nuclear antigen (260 aa).

A DNA-binding region spans residues R61–K80. A Glycyl lysine isopeptide (Lys-Gly) (interchain with G-Cter in ubiquitin) cross-link involves residue K164.

Belongs to the PCNA family. Homotrimer. Forms a complex with activator 1 heteropentamer in the presence of ATP. Component of the replisome complex. Post-translationally, monoubiquitinated by the ube2b-rad18 complex on Lys-164. Monoubiquitination at Lys-164 also takes place in undamaged proliferating cells, and is mediated by the dcx(dtl) complex, leading to enhance PCNA-dependent translesion DNA synthesis.

The protein resides in the nucleus. Its function is as follows. This protein is an auxiliary protein of DNA polymerase delta and is involved in the control of eukaryotic DNA replication by increasing the polymerase's processibility during elongation of the leading strand. The polypeptide is Proliferating cell nuclear antigen (pcna) (Haplochromis burtoni (Burton's mouthbrooder)).